We begin with the raw amino-acid sequence, 210 residues long: Ribosomal RNA small subunit methyltransferase G (210 aa).

Residues G76, L81, 127-128 (VE), and R142 contribute to the S-adenosyl-L-methionine site.

Belongs to the methyltransferase superfamily. RNA methyltransferase RsmG family.

The protein localises to the cytoplasm. The catalysed reaction is guanosine(527) in 16S rRNA + S-adenosyl-L-methionine = N(7)-methylguanosine(527) in 16S rRNA + S-adenosyl-L-homocysteine. In terms of biological role, specifically methylates the N7 position of guanine in position 527 of 16S rRNA. The polypeptide is Ribosomal RNA small subunit methyltransferase G (Vibrio cholerae serotype O1 (strain ATCC 39315 / El Tor Inaba N16961)).